The chain runs to 100 residues: MGETSVTLIGLIVGLLFGLSGIATLLSLMSDVVSDAQAQLSQLGVASTLVMLVIALILIIKVRVLSALIVGAVIGAVLNLVLQANGVNILEMLRAAVFGT.

Helical transmembrane passes span 7–28 (TLIG…LLSL), 38–60 (AQLS…ILII), and 65–87 (LSAL…ANGV).

Its subcellular location is the cell membrane. This is an uncharacterized protein from Archaeoglobus fulgidus (strain ATCC 49558 / DSM 4304 / JCM 9628 / NBRC 100126 / VC-16).